A 1703-amino-acid chain; its full sequence is Pecanex-like protein 1 (1703 aa).

2 helical membrane passes run 31–53 (VNALHLYIWLFLLCFPFTLYMAL) and 57–74 (MVIVGIYCGVIAAMFLLL). A compositionally biased stretch (basic and acidic residues) spans 91–100 (VEHQTRESKG). A disordered region spans residues 91 to 126 (VEHQTRESKGSRGGTGGANDPVTRREDSNGLGDPGG). Residue Asn256 is glycosylated (N-linked (GlcNAc...) asparagine). A run of 3 helical transmembrane segments spans residues 416 to 438 (VLAVVLAVLVAFLGSVLLIHGFF), 477 to 499 (AYSRPVYFCLCCGLIWLLHYGSL), and 525 to 547 (LVIVFTLCFPIIFFVGLLPQVNT). An N-linked (GlcNAc...) asparagine glycan is attached at Asn564. Helical transmembrane passes span 569-591 (LLSALYSILRSIVTVALLYCFCY), 603-622 (IPVLFSVFCGLLVAVSYHLS), 675-697 (LIVCVVIAVLYFAIHVSTVFIAL), and 704-721 (VLYGLLGAVGLLTHYLLP). Asn988, Asn1129, and Asn1391 each carry an N-linked (GlcNAc...) asparagine glycan. Disordered stretches follow at residues 1475-1556 (VQSG…HSIP) and 1577-1598 (TDPLSQHHHPHHHPQQHNPTHA). Low complexity-rich tracts occupy residues 1485–1510 (ARASVVSQSSSYRYSSSRHSSLRTST) and 1518–1556 (RSSTSQLSLRTLPTSLQLRLGSTSDPAGPSSSLSSHSIP). The segment covering 1582 to 1591 (QHHHPHHHPQ) has biased composition (basic residues). The N-linked (GlcNAc...) asparagine glycan is linked to Asn1622.

This sequence belongs to the pecanex family.

It localises to the membrane. This Takifugu rubripes (Japanese pufferfish) protein is Pecanex-like protein 1.